Consider the following 54-residue polypeptide: MQLPATGTEHERTEKDTIIISNLRKIVEKRYAENNREKQKSGKLRELRRGFKTF.

The interval 34–54 is disordered; sequence NNREKQKSGKLRELRRGFKTF.

This is an uncharacterized protein from Acidianus two-tailed virus (ATV).